A 786-amino-acid chain; its full sequence is Protein RDM16 (786 aa).

Basic and acidic residues-rich tracts occupy residues M1–R80, R87–D112, and N123–Q143. Disordered stretches follow at residues M1–L223, K255–T283, R532–K557, and E616–K642. A compositionally biased stretch (polar residues) spans S145 to Y164. Positions S165–S176 are enriched in low complexity. Over residues Q177–T189 the composition is skewed to polar residues. Positions D190 to P203 are enriched in basic and acidic residues. Low complexity predominate over residues T268 to T283. Residues I534 to P547 show a composition bias toward pro residues.

The protein localises to the nucleus. The protein resides in the nucleoplasm. Its function is as follows. Functions in the RNA-directed DNA methylation (RdDM) pathway. Acts as a pre-mRNA splicing factor, likely by affecting Pol V transcripts. Affects DNA methylation of transposable elements (TEs) and preferentially influences NRPD1- and ROS1-targeted loci. This Arabidopsis thaliana (Mouse-ear cress) protein is Protein RDM16.